The chain runs to 43 residues: Protein PsbN (43 aa).

The chain crosses the membrane as a helical span at residues 7-27; sequence LVVAIAAITICITAFAIYTAF.

It belongs to the PsbN family.

The protein resides in the cellular thylakoid membrane. Functionally, may play a role in photosystem I and II biogenesis. In Synechococcus sp. (strain JA-3-3Ab) (Cyanobacteria bacterium Yellowstone A-Prime), this protein is Protein PsbN.